A 186-amino-acid polypeptide reads, in one-letter code: UPF0301 protein Saro_0683 (186 aa).

This sequence belongs to the UPF0301 (AlgH) family.

In Novosphingobium aromaticivorans (strain ATCC 700278 / DSM 12444 / CCUG 56034 / CIP 105152 / NBRC 16084 / F199), this protein is UPF0301 protein Saro_0683.